The primary structure comprises 330 residues: MRALLPLLSVGRGWRVGAAARPPRRVMSLYRTEELGHPRSQDYRLFFKHVAGHYISPFHDIPLKADCKEEHDIPRKKARNDEYENLFNMVVEIPRWTNAKMEIATEEPLNPIKQDIKNGKLRYTPNIFPHKGYIWNYGALPQTWEDPHLRDKSTDCCGDNDPIDVCEIGSKVLSRGDVVHVKILGTLALIDQSETDWKIIAINVNDPEAEKFHDIDDVKKFKPGYLEATLNWFRLYKVPDGKPENKFAFNGEFKNKAFALDVINSAHERWKEMVMKKCDKGAISCVNVHICDSPFHCTMEEARSLVESVPTPSMNKESNVEEEVWHFLRN.

Residues 1–27 (MRALLPLLSVGRGWRVGAAARPPRRVM) constitute a mitochondrion transit peptide. Residues Asp159, Asp164, and Asp196 each coordinate Mg(2+). At Lys211 the chain carries N6-succinyllysine. Lys219 carries the post-translational modification N6-acetyllysine. The residue at position 254 (Lys254) is an N6-succinyllysine. At Lys256 the chain carries N6-acetyllysine.

The protein belongs to the PPase family. Homodimer. Requires Mg(2+) as cofactor.

It localises to the mitochondrion. The catalysed reaction is diphosphate + H2O = 2 phosphate + H(+). In terms of biological role, hydrolyzes inorganic pyrophosphate. This activity is essential for correct regulation of mitochondrial membrane potential, and mitochondrial organization and function. This Mus musculus (Mouse) protein is Inorganic pyrophosphatase 2, mitochondrial (Ppa2).